Here is a 753-residue protein sequence, read N- to C-terminus: MSEKPRRDTGGTGTGSGRSTGQSTNRTSNQQTGTGRTPTATGAHRQPANQSTGGGRSSSTGGRNTPTNQGNARPAAPANARSGNQPARGNNAPAASRSGGSTPAPVRGGGATPAPARGTNTRNARSQQSRGRPQPEEREREREAVLRRPPTPTTTRPVMRPRGPVALPPVMTVRELSEATGIGAADILKTMLKAGMIANINQQIDYETAALIMTDFGIETVENMPEQMVGIVEDVKEVLRSQPPEEMRPRPPVVTIMGHVDHGKTKLLDAIRSTRVAEGEAGGITQHIGAYQVEVNHRKITFLDTPGHEAFTAMRARGAQVTDIVVLVVAADDGVKPQTEEAIAHVKAAGVPMIVAINKIDLPTANPDRIKQQLAALDVIVEEYGGNVPCVHVSARQKINIDGLLEMILLVADLEDLRANPNAPAVGTIIEAKLDKSRGPVATVLIQNGTLHLEDNVLVGCVAGKIKSMFSDSGKRLRHAEPSTPVEIIGLEGVPQAGDILQVMDDLVLAREIALQRQRQQRAEAMAASARGTSLEELFGKVKQGQVKELNLILKADVQGSLDAIAHLIEQLNQSQNEVQTRIIHRGVGAITEGDVNLALASHAIIIGFNARPDPAARRHAEQHGIDIRFYNIIYQLQDDLKKAMAGMLAPTFKEVVEGYAEVRNIFRLPTREVVAGVYVTDGKITRTGQNVRVLRRGVVIHDGKISSLKRFKDDVREVTAGYECGLIVEGFNDIEIGDALEFYRQEQVAATL.

A disordered region spans residues 1–166 (MSEKPRRDTG…PVMRPRGPVA (166 aa)). Composition is skewed to low complexity over residues 19–43 (STGQSTNRTSNQQTGTGRTPTATGA), 71–81 (NARPAAPANAR), and 102–122 (TPAPVRGGGATPAPARGTNTR). Positions 133–146 (PQPEEREREREAVL) are enriched in basic and acidic residues. Low complexity predominate over residues 153–162 (TTTRPVMRPR). The region spanning 249–418 (PRPPVVTIMG…LLVADLEDLR (170 aa)) is the tr-type G domain. Residues 258 to 265 (GHVDHGKT) are G1. 258–265 (GHVDHGKT) is a GTP binding site. The G2 stretch occupies residues 283–287 (GITQH). Residues 304–307 (DTPG) form a G3 region. Residues 304 to 308 (DTPGH) and 358 to 361 (NKID) contribute to the GTP site. The G4 stretch occupies residues 358–361 (NKID). The interval 394–396 (SAR) is G5.

This sequence belongs to the TRAFAC class translation factor GTPase superfamily. Classic translation factor GTPase family. IF-2 subfamily.

The protein resides in the cytoplasm. Functionally, one of the essential components for the initiation of protein synthesis. Protects formylmethionyl-tRNA from spontaneous hydrolysis and promotes its binding to the 30S ribosomal subunits. Also involved in the hydrolysis of GTP during the formation of the 70S ribosomal complex. This Chloroflexus aggregans (strain MD-66 / DSM 9485) protein is Translation initiation factor IF-2.